The primary structure comprises 231 residues: Ribosomal RNA large subunit methyltransferase E (231 aa).

Positions 76, 78, 99, 115, and 139 each coordinate S-adenosyl-L-methionine. K179 (proton acceptor) is an active-site residue.

This sequence belongs to the class I-like SAM-binding methyltransferase superfamily. RNA methyltransferase RlmE family.

Its subcellular location is the cytoplasm. The catalysed reaction is uridine(2552) in 23S rRNA + S-adenosyl-L-methionine = 2'-O-methyluridine(2552) in 23S rRNA + S-adenosyl-L-homocysteine + H(+). Its function is as follows. Specifically methylates the uridine in position 2552 of 23S rRNA at the 2'-O position of the ribose in the fully assembled 50S ribosomal subunit. This Bradyrhizobium sp. (strain ORS 278) protein is Ribosomal RNA large subunit methyltransferase E.